Here is an 87-residue protein sequence, read N- to C-terminus: UPF0250 protein ESA_02696 (87 aa).

It belongs to the UPF0250 family.

The protein is UPF0250 protein ESA_02696 of Cronobacter sakazakii (strain ATCC BAA-894) (Enterobacter sakazakii).